The sequence spans 220 residues: 2-hydroxy-3-keto-5-methylthiopentenyl-1-phosphate phosphatase (220 aa).

The protein belongs to the HAD-like hydrolase superfamily. MtnX family.

It carries out the reaction 2-hydroxy-5-methylsulfanyl-3-oxopent-1-enyl phosphate + H2O = 1,2-dihydroxy-5-(methylsulfanyl)pent-1-en-3-one + phosphate. The protein operates within amino-acid biosynthesis; L-methionine biosynthesis via salvage pathway; L-methionine from S-methyl-5-thio-alpha-D-ribose 1-phosphate: step 4/6. In terms of biological role, dephosphorylates 2-hydroxy-3-keto-5-methylthiopentenyl-1-phosphate (HK-MTPenyl-1-P) yielding 1,2-dihydroxy-3-keto-5-methylthiopentene (DHK-MTPene). The chain is 2-hydroxy-3-keto-5-methylthiopentenyl-1-phosphate phosphatase from Geobacillus kaustophilus (strain HTA426).